A 359-amino-acid polypeptide reads, in one-letter code: MSDKNQIIARASLIEQLVSKRYFEDIGKQLTELEMIYVSKEHLQETDVVRAVYRVLKNCPSVTLKKKAKCLLAKWRGFYKSTHCKPRQSPKVLHTNANKEESAAVSQDVSQDETSGSSHSEIMGLCSSLSRLLPQDAAKPAAAIGSESSTAQMEINEGYLKGDDSECTRKSSGVFQGTLVSVRSKCVELLYTALASSCTDHTEVHIWQNLAREIEEHIFTLHSNNIKKYKTSIRSKVANLKNPRNFHLQQNFLSGTMSAREFAEMSVLDMASQELKQLRASYTESSIQEHCLPQSVDGTWTNKIKCRRCDKYNCKVTVIARGTLFLPSWVQNSNPDEQMTYVICNECGEQWYHNNWVCL.

Positions 1–82 constitute a TFIIS N-terminal domain; sequence MSDKNQIIAR…AKWRGFYKST (82 aa). Residues 84–118 are disordered; sequence CKPRQSPKVLHTNANKEESAAVSQDVSQDETSGSS. The span at 104 to 118 shows a compositional bias: polar residues; the sequence is AVSQDVSQDETSGSS. One can recognise a TFIIS central domain in the interval 182 to 298; the sequence is VRSKCVELLY…EHCLPQSVDG (117 aa).

The sequence is that of Transcription elongation factor A N-terminal and central domain-containing protein (Tceanc) from Mus musculus (Mouse).